A 530-amino-acid polypeptide reads, in one-letter code: Na(+)/H(+) antiporter NhaB (530 aa).

Transmembrane regions (helical) follow at residues 13–33, 34–54, 64–84, 90–110, 113–133, 136–156, 205–225, 234–254, 306–326, 351–371, 378–400, 450–470, and 481–501; these read FLGK…IINP, FVFF…EFIF, PLQP…TSPA, LVAN…IYFM, LLLY…LLSL, CLMA…AVVI, LLMH…VGEP, AGWL…PVFM, ALIA…VGLI, EEAL…AVII, PIIS…IANG, ATPN…APLI, and ALPY…FMLL.

This sequence belongs to the NhaB Na(+)/H(+) (TC 2.A.34) antiporter family.

Its subcellular location is the cell inner membrane. It carries out the reaction 2 Na(+)(in) + 3 H(+)(out) = 2 Na(+)(out) + 3 H(+)(in). In terms of biological role, na(+)/H(+) antiporter that extrudes sodium in exchange for external protons. In Photobacterium profundum (strain SS9), this protein is Na(+)/H(+) antiporter NhaB.